We begin with the raw amino-acid sequence, 222 residues long: Large ribosomal subunit protein uL1 (222 aa).

This sequence belongs to the universal ribosomal protein uL1 family. Part of the 50S ribosomal subunit.

Its function is as follows. Binds directly to 23S rRNA. Probably involved in E site tRNA release. In terms of biological role, protein L1 is also a translational repressor protein, it controls the translation of its operon by binding to its mRNA. In Pyrobaculum arsenaticum (strain DSM 13514 / JCM 11321 / PZ6), this protein is Large ribosomal subunit protein uL1.